The following is a 289-amino-acid chain: Thiosulfate sulfurtransferase (289 aa).

A Rhodanese 1 domain is found at 24-142 (VGAGLRVLDA…WVKEGHPVTA (119 aa)). A hinge region spans residues 143–158 (EPSQPAEAVFKAKLDK). The Rhodanese 2 domain maps to 172–284 (GSKKFQVVDS…WFHRAPPQYK (113 aa)). Arginine 186 contributes to the substrate binding site. Cysteine 244 serves as the catalytic Cysteine persulfide intermediate. Lysine 246 lines the substrate pocket.

As to quaternary structure, monomer. As to expression, expressed in numerous tissues.

It localises to the mitochondrion matrix. The enzyme catalyses thiosulfate + hydrogen cyanide = thiocyanate + sulfite + 2 H(+). In terms of biological role, together with MRPL18, acts as a mitochondrial import factor for the cytosolic 5S rRNA. Only the nascent unfolded cytoplasmic form is able to bind to the 5S rRNA. Formation of iron-sulfur complexes and cyanide detoxification. This chain is Thiosulfate sulfurtransferase (TST), found in Gallus gallus (Chicken).